A 273-amino-acid chain; its full sequence is 2,3,4,5-tetrahydropyridine-2,6-dicarboxylate N-succinyltransferase (273 aa).

2 residues coordinate substrate: Arg-104 and Asp-141.

The protein belongs to the transferase hexapeptide repeat family. As to quaternary structure, homotrimer.

It localises to the cytoplasm. The catalysed reaction is (S)-2,3,4,5-tetrahydrodipicolinate + succinyl-CoA + H2O = (S)-2-succinylamino-6-oxoheptanedioate + CoA. Its pathway is amino-acid biosynthesis; L-lysine biosynthesis via DAP pathway; LL-2,6-diaminopimelate from (S)-tetrahydrodipicolinate (succinylase route): step 1/3. This is 2,3,4,5-tetrahydropyridine-2,6-dicarboxylate N-succinyltransferase from Aromatoleum aromaticum (strain DSM 19018 / LMG 30748 / EbN1) (Azoarcus sp. (strain EbN1)).